Consider the following 118-residue polypeptide: Small ribosomal subunit protein eS24 (118 aa).

It belongs to the eukaryotic ribosomal protein eS24 family.

The protein is Small ribosomal subunit protein eS24 of Sulfolobus acidocaldarius (strain ATCC 33909 / DSM 639 / JCM 8929 / NBRC 15157 / NCIMB 11770).